The sequence spans 603 residues: Methionine--tRNA ligase (603 aa).

Residues 14–24 (PYANGPRHIGH) carry the 'HIGH' region motif. 4 residues coordinate Zn(2+): cysteine 146, cysteine 149, cysteine 159, and cysteine 162. The short motif at 354-358 (KFSSS) is the 'KMSKS' region element. Serine 357 contacts ATP.

This sequence belongs to the class-I aminoacyl-tRNA synthetase family. MetG type 1 subfamily. As to quaternary structure, monomer. Zn(2+) is required as a cofactor.

Its subcellular location is the cytoplasm. The enzyme catalyses tRNA(Met) + L-methionine + ATP = L-methionyl-tRNA(Met) + AMP + diphosphate. Functionally, is required not only for elongation of protein synthesis but also for the initiation of all mRNA translation through initiator tRNA(fMet) aminoacylation. This chain is Methionine--tRNA ligase, found in Salinispora tropica (strain ATCC BAA-916 / DSM 44818 / JCM 13857 / NBRC 105044 / CNB-440).